Here is a 194-residue protein sequence, read N- to C-terminus: 5'-deoxynucleotidase PBPRA2627 (194 aa).

Substrate-binding positions include 18-19 (RW) and His-33. The region spanning 30–142 (ISEHSLQVAF…VKQADSLCAY (113 aa)) is the HD domain. The a divalent metal cation site is built by His-33, His-68, and Asp-69. Residues Asp-69, 77–80 (DMPT), and Asp-137 each bind substrate. Residue Asp-137 coordinates a divalent metal cation.

It belongs to the 5DNU family. Homodimer. Requires a divalent metal cation as cofactor.

It localises to the cytoplasm. The enzyme catalyses a 2'-deoxyribonucleoside 5'-phosphate + H2O = a 2'-deoxyribonucleoside + phosphate. Catalyzes the strictly specific dephosphorylation of 2'-deoxyribonucleoside 5'-monophosphates. In Photobacterium profundum (strain SS9), this protein is 5'-deoxynucleotidase PBPRA2627.